Consider the following 338-residue polypeptide: MSQDNKGNGSKKRDFLGFTGLDAAKIIELFDYSLFIKQQRETNRNSDEFRPIRHKTVAMIFNKPSLRTRVSFELGVYELGGHAISLEGKSIGVGERESIEDIARLLSRYNDAIVARLHEHEIIETLAKHADIPVINALTDLSHPCQVLADAFTLYEKGLWRDDIKVVFVGDGNNVANSWIELAGILPFHFVLACPEGYLPDETLLKQARSNAKGTIEILHDPMEAAKQADVLYTDVWTSMGQEEEMAERLKAFAPFQINAKMVAEAKPSAVIMHCMPAHRGQEISAEVMDGPQSIIIDEAENRLHVQKALMVKLMNHDVYRKFHLTHRLHRAANRLKA.

Residues R116 and 143–146 contribute to the carbamoyl phosphate site; that span reads HPCQ. L-ornithine-binding positions include N174, D235, and 239–240; that span reads SM. C275 and R303 together coordinate carbamoyl phosphate.

Belongs to the aspartate/ornithine carbamoyltransferase superfamily. OTCase family.

The protein resides in the cytoplasm. The enzyme catalyses carbamoyl phosphate + L-ornithine = L-citrulline + phosphate + H(+). It participates in amino-acid biosynthesis; L-arginine biosynthesis; L-arginine from L-ornithine and carbamoyl phosphate: step 1/3. Reversibly catalyzes the transfer of the carbamoyl group from carbamoyl phosphate (CP) to the N(epsilon) atom of ornithine (ORN) to produce L-citrulline. In Chlorobaculum tepidum (strain ATCC 49652 / DSM 12025 / NBRC 103806 / TLS) (Chlorobium tepidum), this protein is Ornithine carbamoyltransferase.